The primary structure comprises 158 residues: SsrA-binding protein (158 aa).

It belongs to the SmpB family.

The protein resides in the cytoplasm. Functionally, required for rescue of stalled ribosomes mediated by trans-translation. Binds to transfer-messenger RNA (tmRNA), required for stable association of tmRNA with ribosomes. tmRNA and SmpB together mimic tRNA shape, replacing the anticodon stem-loop with SmpB. tmRNA is encoded by the ssrA gene; the 2 termini fold to resemble tRNA(Ala) and it encodes a 'tag peptide', a short internal open reading frame. During trans-translation Ala-aminoacylated tmRNA acts like a tRNA, entering the A-site of stalled ribosomes, displacing the stalled mRNA. The ribosome then switches to translate the ORF on the tmRNA; the nascent peptide is terminated with the 'tag peptide' encoded by the tmRNA and targeted for degradation. The ribosome is freed to recommence translation, which seems to be the essential function of trans-translation. The sequence is that of SsrA-binding protein from Caldicellulosiruptor bescii (strain ATCC BAA-1888 / DSM 6725 / KCTC 15123 / Z-1320) (Anaerocellum thermophilum).